The sequence spans 1227 residues: Pre-mRNA-splicing factor ATP-dependent RNA helicase PRP16 (1227 aa).

Position 2 is an N-acetylglycine (glycine 2). Serine 56 is subject to Phosphoserine. A compositionally biased stretch (basic and acidic residues) spans 60-89 (REREEKDDGEDKKKSKVSSYKDWEESKDDQ). The disordered stretch occupies residues 60 to 320 (REREEKDDGE…ERQQWEDDQR (261 aa)). Threonine 117 is subject to Phosphothreonine. Residues 128–201 (FWERSRQRER…SRRNEPESPR (74 aa)) are compositionally biased toward basic and acidic residues. Phosphoserine is present on residues serine 199 and serine 224. A compositionally biased stretch (polar residues) spans 222–239 (YGSSRRSQWESPSPTPSY). Over residues 240–263 (RDSERSHRLSTRDRDRSVRGKYSD) the composition is skewed to basic and acidic residues. Lysine 260 is modified (N6-acetyllysine). Residues 300-310 (GEEGISFDTEE) are compositionally biased toward acidic residues. The span at 311-320 (ERQQWEDDQR) shows a compositional bias: basic and acidic residues. Glycyl lysine isopeptide (Lys-Gly) (interchain with G-Cter in SUMO2) cross-links involve residues lysine 482, lysine 483, and lysine 504. One can recognise a Helicase ATP-binding domain in the interval 542 to 705 (LTIIRDNSIV…FGNVPIFHIP (164 aa)). An ATP-binding site is contributed by 555–562 (GETGSGKT). The DEAH box signature appears at 652–655 (DEAH). Residues 727 to 902 (AVKQSLQVHL…NVVLLLKSLG (176 aa)) enclose the Helicase C-terminal domain. Residues 1155–1227 (GKSRQENRRR…PRRTPARFGL (73 aa)) are disordered. Composition is skewed to basic and acidic residues over residues 1157–1169 (SRQENRRRAKEEA) and 1181–1194 (EQLRARRQEQEKRS). Lysine 1166 is covalently cross-linked (Glycyl lysine isopeptide (Lys-Gly) (interchain with G-Cter in SUMO2)). Position 1194 is a phosphoserine (serine 1194).

It belongs to the DEAD box helicase family. DEAH subfamily. PRP16 sub-subfamily. In terms of assembly, identified in the spliceosome C complex.

It is found in the nucleus. The catalysed reaction is ATP + H2O = ADP + phosphate + H(+). Its function is as follows. Probable ATP-binding RNA helicase. Involved in pre-mRNA splicing as component of the spliceosome. The sequence is that of Pre-mRNA-splicing factor ATP-dependent RNA helicase PRP16 (DHX38) from Homo sapiens (Human).